We begin with the raw amino-acid sequence, 210 residues long: uncharacterized protein (210 aa).

Residues 1–17 (MKRTAVSLCLLTGLLSG) form the signal peptide. The N-palmitoyl cysteine moiety is linked to residue Cys-18. The S-diacylglycerol cysteine moiety is linked to residue Cys-18. Polar residues predominate over residues 176–195 (EMKTSPQGSPVSENENANGE). Residues 176–210 (EMKTSPQGSPVSENENANGETRQDMKIDRNDKNAR) are disordered. Over residues 196–210 (TRQDMKIDRNDKNAR) the composition is skewed to basic and acidic residues.

Its subcellular location is the cell membrane. This is an uncharacterized protein from Bacillus subtilis (strain 168).